Consider the following 102-residue polypeptide: Small ribosomal subunit protein uS10 (102 aa).

Belongs to the universal ribosomal protein uS10 family. In terms of assembly, part of the 30S ribosomal subunit.

Its function is as follows. Involved in the binding of tRNA to the ribosomes. The sequence is that of Small ribosomal subunit protein uS10 from Listeria innocua serovar 6a (strain ATCC BAA-680 / CLIP 11262).